We begin with the raw amino-acid sequence, 90 residues long: Small ribosomal subunit protein uS15 (90 aa).

It belongs to the universal ribosomal protein uS15 family. Part of the 30S ribosomal subunit. Forms a bridge to the 50S subunit in the 70S ribosome, contacting the 23S rRNA.

One of the primary rRNA binding proteins, it binds directly to 16S rRNA where it helps nucleate assembly of the platform of the 30S subunit by binding and bridging several RNA helices of the 16S rRNA. Functionally, forms an intersubunit bridge (bridge B4) with the 23S rRNA of the 50S subunit in the ribosome. The chain is Small ribosomal subunit protein uS15 from Tropheryma whipplei (strain TW08/27) (Whipple's bacillus).